Reading from the N-terminus, the 473-residue chain is Cephalotoxin-like protein (473 aa).

The N-terminal stretch at 1 to 21 is a signal peptide; it reads RWLGWQKFCWISCLFSSISSG. 2 coiled-coil regions span residues 40–60 and 116–147; these read AINAINEEYIAQAKAIEEALK and LINERFNEVNAKLDRIDEKLDEMEKSIKADTA.

In terms of tissue distribution, component of the acid-insoluble and acid-soluble organic matrix of the aragonitic skeleton (at protein level).

Its subcellular location is the secreted. The chain is Cephalotoxin-like protein from Acropora millepora (Staghorn coral).